The sequence spans 277 residues: Outer kinetochore KNL1 complex subunit ZWINT (277 aa).

An interaction with NDC80 and ZW10 region spans residues 80 to 155 (ASEDTSRQKA…MEKRRAVQNQ (76 aa)). Positions 104–217 (REHVEAIKIG…RYQTFLQLLY (114 aa)) form a coiled coil. The disordered stretch occupies residues 228–277 (AEAEAENLPDDKPQQPTRPQEQSTGDTMGRDPGVSFKAVGLQPAGDVNLP). Residues 241–253 (QQPTRPQEQSTGD) show a composition bias toward polar residues.

In terms of assembly, component of the KNL1 complex composed of KNL1 and ZWINT. Part of the ten-subunit outer kinetochore KMN network that includes the KNL1, MIS12 and NDC80 complexes; a bioriented kinetochore contains approximately 150 copies of the network. Interacts with the MIS12 complex subunits MIS12 DSN1, and PMF1. Interacts with the NDC80 complex subunit NDC80 during mitosis. Interacts with ZW10. Interacts with CETN3.

Its subcellular location is the nucleus. The protein resides in the chromosome. The protein localises to the centromere. It localises to the kinetochore. In terms of biological role, acts as a component of the outer kinetochore KNL1 complex that serves as a docking point for spindle assembly checkpoint components and mediates microtubule-kinetochore interactions. Kinetochores, consisting of a centromere-associated inner segment and a microtubule-contacting outer segment, play a crucial role in chromosome segregation by mediating the physical connection between centromeric DNA and spindle microtubules. The outer kinetochore is made up of the ten-subunit KMN network, comprising the MIS12, NDC80 and KNL1 complexes, and auxiliary microtubule-associated components; together they connect the outer kinetochore with the inner kinetochore, bind microtubules, and mediate interactions with mitotic checkpoint proteins that delay anaphase until chromosomes are bioriented on the spindle. Targets the RZZ complex to the kinetochore at prometaphase. Recruits MAD2L1 to the kinetochore, but is not required for BUB1B localization. In addition to orienting mitotic chromosomes, it is also essential for alignment of homologous chromosomes during meiotic metaphase I. In meiosis I, required to activate the spindle assembly checkpoint at unattached kinetochores to correct erroneous kinetochore-microtubule attachments. The sequence is that of Outer kinetochore KNL1 complex subunit ZWINT (ZWINT) from Homo sapiens (Human).